The following is a 551-amino-acid chain: MLARPETDTSVDYYAILKLQKNATFQQIRKQYLFLALQYHPDRNPGDEERAVKRFQRLQLAHEVLSDATKRLIYDQLFGLSTRTRSQYKPNSTSNPSKHTSAYASYNKGKNSKWSSPFASTTKKPQESSEKYSKKSSTRKKEHFNKKPSFPRDTEYSHIYNMKYDPRSGIGIRVKRQEPESLKKENNNSDYLPKSAMKQKKGGPKDSSKHPSNDGKIPESKPSVYKSRASNLFSSNEQSIHSSFGSKFHFDKSSNPFSFEFSPSSNAAKPSNSEECNIPKFNSSFKTSNDFFTFTKTEESSPYSFSFKLEDSNTPKFKSSSKPVKSSFVFTKPEAESSNPFSFDFGSSGPKSRSDTRNNIRTPLWTSSVFEKPESDLPNKTAFGFMRSNTSTFNQKCDDFSSASFMKEKTEFEEQLQEDNDHSLGDLFSKINISTESPSVAMPSIPVIQPPSFPIFSSIDFNVRNREYWNQLMVFQKLYSKYCTESQHFINSWINIKKELHIVPVNWEIFEKVEKSWDQCEEFVAEFRQTEEKYFLFLKRLRELINKNQML.

The 67-residue stretch at 12 to 78 (DYYAILKLQK…TKRLIYDQLF (67 aa)) folds into the J domain. The segment covering 85–122 (RSQYKPNSTSNPSKHTSAYASYNKGKNSKWSSPFASTT) has biased composition (polar residues). Disordered regions lie at residues 85–153 (RSQY…FPRD), 176–226 (RQEP…SVYK), and 334–359 (EAES…TRNN). Positions 124–133 (KPQESSEKYS) are enriched in basic and acidic residues. Residues 134 to 146 (KKSSTRKKEHFNK) show a composition bias toward basic residues. 2 stretches are compositionally biased toward basic and acidic residues: residues 176-187 (RQEPESLKKENN) and 203-219 (GPKD…KIPE).

It localises to the cytoplasm. The protein localises to the cytoskeleton. In terms of biological role, has a role in sporulation. In Schizosaccharomyces pombe (strain 972 / ATCC 24843) (Fission yeast), this protein is Meiotically up-regulated gene 184 protein (mug184).